Reading from the N-terminus, the 38-residue chain is Photosystem I reaction center subunit VIII (38 aa).

The helical transmembrane segment at 12–32 (WILIPIIGWLMPAVVMGLLFL) threads the bilayer.

Belongs to the PsaI family.

The protein resides in the cellular thylakoid membrane. Its function is as follows. May help in the organization of the PsaL subunit. The sequence is that of Photosystem I reaction center subunit VIII from Gloeothece citriformis (strain PCC 7424) (Cyanothece sp. (strain PCC 7424)).